Consider the following 119-residue polypeptide: Immunoglobulin heavy variable 2-5 (119 aa).

The first 19 residues, 1 to 19, serve as a signal peptide directing secretion; that stretch reads MDTLCSTLLLLTIPSWVLS. A Pyrrolidone carboxylic acid modification is found at Gln-20. The tract at residues 20–44 is framework-1; sequence QITLKESGPTLVKPTQTLTLTCTFS. The Ig-like domain occupies 20–119; sequence QITLKESGPT…DTATYYCAHR (100 aa). Cysteines 41 and 116 form a disulfide. A complementarity-determining-1 region spans residues 45 to 54; it reads GFSLSTSGVG. The tract at residues 55–71 is framework-2; that stretch reads VGWIRQPPGKALEWLAL. A complementarity-determining-2 region spans residues 72 to 78; it reads IYWDDDK. The segment at 79 to 116 is framework-3; it reads RYSPSLKSRLTITKDTSKNQVVLTMTNMDPVDTATYYC. A complementarity-determining-3 region spans residues 117–119; the sequence is AHR.

In terms of assembly, immunoglobulins are composed of two identical heavy chains and two identical light chains; disulfide-linked.

Its subcellular location is the secreted. The protein localises to the cell membrane. In terms of biological role, v region of the variable domain of immunoglobulin heavy chains that participates in the antigen recognition. Immunoglobulins, also known as antibodies, are membrane-bound or secreted glycoproteins produced by B lymphocytes. In the recognition phase of humoral immunity, the membrane-bound immunoglobulins serve as receptors which, upon binding of a specific antigen, trigger the clonal expansion and differentiation of B lymphocytes into immunoglobulins-secreting plasma cells. Secreted immunoglobulins mediate the effector phase of humoral immunity, which results in the elimination of bound antigens. The antigen binding site is formed by the variable domain of one heavy chain, together with that of its associated light chain. Thus, each immunoglobulin has two antigen binding sites with remarkable affinity for a particular antigen. The variable domains are assembled by a process called V-(D)-J rearrangement and can then be subjected to somatic hypermutations which, after exposure to antigen and selection, allow affinity maturation for a particular antigen. This Homo sapiens (Human) protein is Immunoglobulin heavy variable 2-5.